A 245-amino-acid chain; its full sequence is Ribosomal RNA small subunit methyltransferase G (245 aa).

S-adenosyl-L-methionine contacts are provided by residues Gly80, Phe85, 103-105, 131-132, and Arg150; these read DAT and AE.

The protein belongs to the methyltransferase superfamily. RNA methyltransferase RsmG family.

The protein localises to the cytoplasm. Functionally, specifically methylates the N7 position of a guanine in 16S rRNA. The chain is Ribosomal RNA small subunit methyltransferase G from Deinococcus geothermalis (strain DSM 11300 / CIP 105573 / AG-3a).